The chain runs to 406 residues: 4-hydroxy-3-methylbut-2-en-1-yl diphosphate synthase (ferredoxin) (406 aa).

The [4Fe-4S] cluster site is built by cysteine 315, cysteine 318, cysteine 349, and glutamate 356.

This sequence belongs to the IspG family. [4Fe-4S] cluster is required as a cofactor.

It carries out the reaction (2E)-4-hydroxy-3-methylbut-2-enyl diphosphate + 2 oxidized [2Fe-2S]-[ferredoxin] + H2O = 2-C-methyl-D-erythritol 2,4-cyclic diphosphate + 2 reduced [2Fe-2S]-[ferredoxin] + H(+). It participates in isoprenoid biosynthesis; isopentenyl diphosphate biosynthesis via DXP pathway; isopentenyl diphosphate from 1-deoxy-D-xylulose 5-phosphate: step 5/6. Its function is as follows. Converts 2C-methyl-D-erythritol 2,4-cyclodiphosphate (ME-2,4cPP) into 1-hydroxy-2-methyl-2-(E)-butenyl 4-diphosphate. The polypeptide is 4-hydroxy-3-methylbut-2-en-1-yl diphosphate synthase (ferredoxin) (Rippkaea orientalis (strain PCC 8801 / RF-1) (Cyanothece sp. (strain PCC 8801))).